Consider the following 2667-residue polypeptide: eIF-2-alpha kinase activator GCN1 (2667 aa).

8 HEAT repeats span residues 19 to 56 (DSFYSEIKELEKSIQSNKLSERKNTLTRINSIGKHELS), 95 to 132 (QWIFSLVQSLKQLFKDISSATNTSLVTDELKINIVKFT), 159 to 198 (SFSLVLLNYFIDQIQSNSDLTTLLFAAQELLYRELTLQHM), 293 to 330 (DLQSIILPPLSRHIKRDQDQVFKILIFILENLSSDFNV), 336 to 375 (LLKSMLLPMLLPVIQSTISIEENRKLLKKTFTLIIERSKD), 398 to 439 (SQKL…SISI), 466 to 503 (ELPEQTIKIITNSLKNDDDIIKGQVILSLSKSLGPEAN), and 794 to 832 (LLNEELVKLMVKALSYEPVLAITQQQWSIYHTLPTELFV). Positions 842–879 (RNDRKVKPKTAEEQRDEESRKRIEEKKKIQSGELEKQE) are disordered. HEAT repeat units lie at residues 929–967 (PIIVALLQLMKHEITNHQFTQVFEKLICCVPSRFKLDRS), 985–1024 (LSEIQILGFIQKILTHIRESIAKEALSGFAFNYFWPIIKN), 1085–1122 (GVETSDIGELMEGIISKHVQVRSICLQAIEKIPSIYSP), 1199–1237 (HMIPEIVDNLFEIYEQNYPDEIRETPITSKFRISVATAL), 1290–1330 (GELL…HMDA), 1333–1370 (PKVSIVIDKLVDALSIPSESVQVGISKCIAQLIPSFKK), 1371–1407 (QGDRLIPMLLEKLKNSSGNYADRRGAAFGLAGSVKGL), 1412–1450 (LKNYSILDTLQSYIEDKKHPTSRQGALFAFECLCNTIGR), 1454–1491 (PYIIHILPKLLVCFGDNVSEVRDATADTAKAIMSQLSG), 1492–1529 (HGVKIVLPALLKALDDRSWRTKEGSIELLGAMAFCAPK), 1533–1570 (SCLPTIVPKLTYVLNDTHTKVQEAAKEALSHIGSVIRN), 1572–1608 (EIQIHVPLLLQTYDDPEIHSKELLENLLSTNYVHTID), 1610–1647 (ASLSLLLPILERTLKERSSELKKMSCQIVGNLCSLTEP), 1652–1689 (PYLNILMPVMKTVLLDPIPEVRAICARALGLLVRGMGE), 1691–1728 (NFSTLIPWLLETVKSDQGAVERSGAAQGLSEVLASLDI), 1729–1766 (SRFNSLINELLAMTNSPRPHVREGILSIFIFTPISLGD), 1770–1807 (PYLPKVLPQVLKGLADDSDPVREVCMRCGQSIVLQFAV), and 1809–1845 (GIEVIVPALEKVLFHENWRIRLSCVQLFGDLLFKLAG). The tract at residues 1853 to 1875 (SNNSSYNAKDDDDDEPGSSGNDI) is disordered. 10 HEAT repeats span residues 1882–1919 (ERLGRILSSLYMMRFDNNSSVRQKVLLIWKYIVSNTPK), 1923–1960 (EILPTLIEMIISSIGSNNVEKRQISAKTLGDIVSKLSD), 1962–1998 (ILPEILPILERGLRSELEETRQGVCIGLSEVISSAKT), 2002–2039 (PYLSSVVTCITKALCDPLIDVREAAAKAFDHLYHTFGS), 2040–2078 (KASNEILPQLIQLLDNSNNKDLAGYALDGLRQVILVRSS), 2080–2110 (VLPVLIPKLLSRPISTSNVTALSSLAADAGE), 2114–2152 (VHLSTIIPSLIESFTNPNTISNAKEIKEAAVSICKSIDE), 2154–2190 (GWDTLIGLLIEQTEIRLPNIRLGACELIGEFYNGNTM), 2193–2230 (EYPEELLLSLLSLFNDPDALVQQAANNALGFITKSLKK), and 2264–2301 (KGLASVLPVLISGLMYGTSDQREQATNTLRTVINHTSA). Residues 2265–2412 (GLASVLPVLI…ISQESKLRAL (148 aa)) are RWDBD region. An HEAT 37; degenerate repeat occupies 2326–2348 (QVKSAILQTLSLLISKSPASMKI). The stretch at 2349-2385 (FLHQLQPTFIKCLSDSHKNVRTNAASALGLLMTLSSS) is one HEAT 38; degenerate repeat. HEAT repeat units lie at residues 2387–2421 (DQLVNSLITGISTADSISQESKLRALQSIFEKKPK), 2425–2462 (ATLDKAIATIVDFLYQPSDDLRSMVAQTIGASSKCFTS), 2508–2545 (PNMPTIIKIIQTDCRDEKGPIRESSAYLAEAILVASPL), and 2546–2583 (TYAKDLVPSICHLIGDQSSSVSISALNVIKRFCKSNQQ).

The protein belongs to the GCN1 family. As to quaternary structure, interacts with eif2ak4/gcn2; this interaction stimulates the eif2ak4/gcn2 kinase activity and is impaired by impact upon a variety of stress conditions, such as amino acid depletion, UV-C irradiation, proteasome inhibitor treatment and glucose deprivation. Interacts with impact; this prevents the interaction of gcn1 with eif2ak4/gcn2 and inhibits eif2ak4/gcn2 kinase activity.

The protein localises to the cytoplasm. Its function is as follows. Ribosome collision sensor that activates a translation quality control pathway when a ribosome has stalled during translation. Directly binds to the ribosome and acts as a sentinel for colliding ribosomes. Gcn1 also acts as a positive activator of the integrated stress response (ISR) by mediating activation of eif2ak4/gcn2 in response to amino acid starvation. Interaction with eif2ak4/gcn2 on translating ribosomes stimulates eif2ak4/gcn2 kinase activity, leading to phosphorylation of eukaryotic translation initiation factor 2 (eIF-2-alpha/eif2s1). EIF2S1/eIF-2-alpha phosphorylation converts EIF2S1/eIF-2-alpha into a global protein synthesis inhibitor, leading to a global attenuation of cap-dependent translation, and thus to a reduced overall utilization of amino acids, while concomitantly initiating the preferential translation of ISR-specific mRNAs, such as the transcriptional activator atf4, and hence allowing atf4-mediated reprogramming of amino acid biosynthetic gene expression to alleviate nutrient depletion. This Dictyostelium discoideum (Social amoeba) protein is eIF-2-alpha kinase activator GCN1.